The sequence spans 395 residues: Enoyl-[acyl-carrier-protein] reductase [NADH] (395 aa).

Residues 48–53 (GASTGY), 74–75 (FE), 111–112 (DA), and 139–140 (LA) contribute to the NAD(+) site. Tyr-225 contributes to the substrate binding site. Catalysis depends on Tyr-235, which acts as the Proton donor. NAD(+) is bound by residues Lys-244 and 273–275 (LVT).

This sequence belongs to the TER reductase family. Monomer.

The enzyme catalyses a 2,3-saturated acyl-[ACP] + NAD(+) = a (2E)-enoyl-[ACP] + NADH + H(+). The protein operates within lipid metabolism; fatty acid biosynthesis. In terms of biological role, involved in the final reduction of the elongation cycle of fatty acid synthesis (FAS II). Catalyzes the reduction of a carbon-carbon double bond in an enoyl moiety that is covalently linked to an acyl carrier protein (ACP). This chain is Enoyl-[acyl-carrier-protein] reductase [NADH], found in Saccharophagus degradans (strain 2-40 / ATCC 43961 / DSM 17024).